Here is a 503-residue protein sequence, read N- to C-terminus: Glucose-6-phosphate 1-dehydrogenase (503 aa).

NADP(+)-binding positions include 14-21, Arg-49, and Lys-158; that span reads GASGDLSK. Residues Lys-158, 188 to 192, Glu-226, and Asp-245 contribute to the D-glucose 6-phosphate site; that span reads HYLGK. His-250 (proton acceptor) is an active-site residue. Residue Lys-341 coordinates NADP(+). A D-glucose 6-phosphate-binding site is contributed by Lys-344. Lys-350, Arg-354, and Arg-376 together coordinate NADP(+). Gln-378 is a D-glucose 6-phosphate binding site. NADP(+) contacts are provided by residues 384–386, Arg-471, and Tyr-487; that span reads YLK.

This sequence belongs to the glucose-6-phosphate dehydrogenase family.

It carries out the reaction D-glucose 6-phosphate + NADP(+) = 6-phospho-D-glucono-1,5-lactone + NADPH + H(+). It participates in carbohydrate degradation; pentose phosphate pathway; D-ribulose 5-phosphate from D-glucose 6-phosphate (oxidative stage): step 1/3. In terms of biological role, catalyzes the rate-limiting step of the oxidative pentose-phosphate pathway, which represents a route for the dissimilation of carbohydrates besides glycolysis. The main function of this enzyme is to provide reducing power (NADPH) and pentose phosphates for fatty acid and nucleic acid synthesis. The G6PDH activity is required to cope with hydrogen peroxide and potassium bisulfite stresses and plays a role in adaptation to conditions used in wine fermentations. The protein is Glucose-6-phosphate 1-dehydrogenase of Hanseniaspora uvarum (Yeast).